The primary structure comprises 297 residues: Protease HtpX homolog (297 aa).

A helical transmembrane segment spans residues 16–36 (IFMAIGFLVGGMAGMILAFVV). His134 contacts Zn(2+). The active site involves Glu135. His138 lines the Zn(2+) pocket. Helical transmembrane passes span 147-167 (MTVTATLAGAIGMLANFALFF) and 175-195 (IGSIAIMIFAPMAAALVQMAI). Residue Glu200 coordinates Zn(2+).

The protein belongs to the peptidase M48B family. The cofactor is Zn(2+).

The protein localises to the cell inner membrane. The chain is Protease HtpX homolog from Hyphomonas neptunium (strain ATCC 15444).